Reading from the N-terminus, the 276-residue chain is Rhomboid protease GlpG (276 aa).

6 helical membrane passes run 94 to 114, 142 to 162, 169 to 189, 192 to 212, 229 to 249, and 250 to 270; these read GPVTWIVMLACVVVYIAMSLI, IFMHFSLMHILFNLLWWWYLG, LGSGKLIVITVISALLSGYVQ, FSGPWFGGLSGVVYALMGYVW, LIIFALLWIVASWFDWFGMSM, and ANGAHIAGLIVGLAMAFVDTL. Ser201 functions as the Nucleophile in the catalytic mechanism. His254 is an active-site residue.

The protein belongs to the peptidase S54 family.

It localises to the cell inner membrane. The catalysed reaction is Cleaves type-1 transmembrane domains using a catalytic dyad composed of serine and histidine that are contributed by different transmembrane domains.. Its function is as follows. Rhomboid-type serine protease that catalyzes intramembrane proteolysis. This Salmonella paratyphi A (strain ATCC 9150 / SARB42) protein is Rhomboid protease GlpG.